Consider the following 643-residue polypeptide: Transducer protein Htr8 (643 aa).

Helical transmembrane passes span 48–68 (VFVLAHIPLLLALGLYEGTES), 79–99 (PGILIAAELGIVGALVGLASI), 115–134 (VLASSVVLVQFSGGFIEAHF), 149–169 (WLPFALGLVYVVFTHGVFGMI), and 184–204 (PWVWGGIHGAFVLLLAGALMA). An HAMP domain is found at 273–326 (ERLEATANTYGAAMARAADGDLSVRLDPDVENDAMAAIAASFNEMLDETETTIR). Positions 345–581 (GVVEIEDASG…EAVSMIAEVS (237 aa)) constitute a Methyl-accepting transducer domain.

Belongs to the methyl-accepting chemotaxis (MCP) protein family. Methylated by CheR.

Its subcellular location is the cell membrane. Its function is as follows. Potentially involved in chemo- or phototactic signal transduction. The protein is Transducer protein Htr8 (htr8) of Halobacterium salinarum (strain ATCC 29341 / DSM 671 / R1).